The chain runs to 991 residues: Collagenase ColT (991 aa).

The N-terminal stretch at 1–28 (MKKKFIKMLCSIAIGCMISTSYSIKVSA) is a signal peptide. A propeptide spanning residues 29–52 (FSNGNTKTNPNGEFKSLSLNSTNP) is cleaved from the precursor. The tract at residues 53–727 (YKTKYSFNDL…VYDIVFHGLL (675 aa)) is S1 metalloprotease domain, degrades FALGPA (furylacryloyl-Leu-Gly-Pro-Ala). Residues 57-330 (YSFNDLNKLS…AIEAIKEDFN (274 aa)) form an activator domain region. The interval 340–611 (DINKLIEEGK…MENLVNNYDN (272 aa)) is catalytic subdomain. Glutamate 440 contacts Ca(2+). Residue histidine 465 participates in Zn(2+) binding. Glutamate 466 is an active-site residue. Histidine 469 contributes to the Zn(2+) binding site. Glycine 473, isoleucine 477, and glycine 479 together coordinate Ca(2+). Glutamate 499 lines the Zn(2+) pocket. The tract at residues 619-731 (DDYMKQYDNK…VFHGLLSHNK (113 aa)) is helper subdomain. 2 collagen-binding domain regions span residues 755-870 (IYEK…NISD) and 878-991 (IKKI…VIIN). Positions 757, 759, 761, 784, 787, 883, 885, 887, 888, 910, and 913 each coordinate Ca(2+).

It belongs to the peptidase M9B family. Collagenase subfamily. Requires Ca(2+) as cofactor. Zn(2+) serves as cofactor.

The protein localises to the secreted. It carries out the reaction Digestion of native collagen in the triple helical region at Xaa-|-Gly bonds. With synthetic peptides, a preference is shown for Gly at P3 and P1', Pro and Ala at P2 and P2', and hydroxyproline, Ala or Arg at P3'.. With respect to regulation, partially inhibited by 1-10-phenanthroline; inactivation is irreversible. Partially inhibited by EDTA; inactivation is reversible. Inhibited by broad-spectrum zinc metalloprotease inhibitor batimastat. N-aryl mercaptoacetamide-based inhibitors have been isolated that act on clostridial collagenases with submicromolar affinity while having negligibile activity on human collagenases. Its function is as follows. Clostridial collagenases are among the most efficient degraders of eukaryotic collagen known; saprophytes use collagen as a carbon source while pathogens additionally digest collagen to aid in host colonization. Has both tripeptidylcarboxypeptidase on Gly-X-Y and endopeptidase activities; the endopeptidase cuts within the triple helix region of collagen while tripeptidylcarboxypeptidase successively digests the exposed ends, thus clostridial collagenases can digest large sections of collagen. The activator domain (residues 57-330) and catalytic subdomain (340-611) open and close around substrate allowing digestion when the protein is closed. This chain is Collagenase ColT, found in Clostridium tetani (strain Massachusetts / E88).